Consider the following 144-residue polypeptide: Complexin-1 (144 aa).

The segment covering Met-1 to Leu-10 has biased composition (gly residues). Residues Met-1–Leu-119 form a disordered region. 2 stretches are compositionally biased toward basic and acidic residues: residues Leu-18–Gly-27 and Ala-36–Leu-86. The stretch at Glu-29 to Lys-67 forms a coiled coil. The segment covering Leu-103–Phe-112 has biased composition (polar residues). A Cysteine methyl ester modification is found at Cys-141. The S-farnesyl cysteine moiety is linked to residue Cys-141. Residues Asn-142 to Gln-144 constitute a propeptide, removed in mature form.

Belongs to the complexin/synaphin family. In terms of assembly, binds to the SNARE core complex containing SNAP25, synaptobrevin and syntaxin-1. As to expression, expressed in a subset of neurons in the central nervous system, including large serotoninergic Retzius neurons and pressure-sensitive P cells.

Its subcellular location is the membrane. Positively regulates a late step in synaptic vesicle exocytosis. The polypeptide is Complexin-1 (cpx1) (Hirudo medicinalis (Medicinal leech)).